The chain runs to 50 residues: Sperm protamine P1 (50 aa).

It belongs to the protamine P1 family. In terms of assembly, cross-linked by interchain disulfide bonds around the DNA-helix. As to expression, testis.

The protein resides in the nucleus. Its subcellular location is the chromosome. Functionally, protamines substitute for histones in the chromatin of sperm during the haploid phase of spermatogenesis. They compact sperm DNA into a highly condensed, stable and inactive complex. The protein is Sperm protamine P1 (PRM1) of Pan paniscus (Pygmy chimpanzee).